Consider the following 2284-residue polypeptide: RNA1 polyprotein (2284 aa).

Residues 567–1172 (CTAEEIFRMH…LVENYSLLLT (606 aa)) are Cytoplasmic-facing. Residues 750–918 (VSKLEEVHQR…DNTHFTPRAY (169 aa)) enclose the SF3 helicase domain. Residue 780 to 787 (GASQSGKT) participates in ATP binding. A helical membrane pass occupies residues 1173-1193 (LVAILVLIATAYSLISTLIGL). At 1194 to 1216 (AGCSSFAGGMVALNHVSNASIPC) the chain is on the lumenal side. O-(5'-phospho-RNA)-serine is present on Ser-1217. The Peptidase C3 domain maps to 1242–1457 (GPAQGQGDHE…SVIPSYSSSF (216 aa)). Active-site for picornain 3C-like protease activity residues include His-1283, Glu-1327, and Cys-1419. The 125-residue stretch at 1727–1851 (DVGYNCDYKG…TVSQSIMTSF (125 aa)) folds into the RdRp catalytic domain.

Belongs to the nepoviruses RNA1 polyprotein family. Specific enzymatic cleavages by picornain 3C-like protease in vivo yield mature proteins. Picornain 3C-like protease is autocatalytically processed. In terms of processing, VPg is uridylylated by the polymerase and is covalently linked to the 5'-end of genomic RNA. This uridylylated form acts as a nucleotide-peptide primer for the polymerase.

It is found in the host endoplasmic reticulum lumen. Its subcellular location is the host endoplasmic reticulum membrane. It carries out the reaction RNA(n) + a ribonucleoside 5'-triphosphate = RNA(n+1) + diphosphate. Functionally, picornain 3C-like protease is a thiol protease that cleaves the P1 and P2 polyproteins. The polypeptide is RNA1 polyprotein (Vitis vinifera (Grape)).